Here is a 276-residue protein sequence, read N- to C-terminus: Energy-coupling factor transporter ATP-binding protein EcfA2 (276 aa).

The ABC transporter domain maps to 1–233; sequence MKTPFERLAL…GEEMAGWGLD (233 aa). Position 27-34 (27-34) interacts with ATP; that stretch reads GHTGSGKS. The Proton acceptor role is filled by E158.

Belongs to the ABC transporter superfamily. Energy-coupling factor EcfA family. Forms a stable energy-coupling factor (ECF) transporter complex composed of 2 membrane-embedded substrate-binding proteins (S component), 2 ATP-binding proteins (A component) and 2 transmembrane proteins (T component).

The protein localises to the cell membrane. ATP-binding (A) component of a common energy-coupling factor (ECF) ABC-transporter complex. Unlike classic ABC transporters this ECF transporter provides the energy necessary to transport a number of different substrates. The chain is Energy-coupling factor transporter ATP-binding protein EcfA2 from Bacillus subtilis (strain 168).